A 367-amino-acid polypeptide reads, in one-letter code: Histidinol-phosphate aminotransferase (367 aa).

The residue at position 221 (lysine 221) is an N6-(pyridoxal phosphate)lysine.

It belongs to the class-II pyridoxal-phosphate-dependent aminotransferase family. Histidinol-phosphate aminotransferase subfamily. As to quaternary structure, homodimer. Pyridoxal 5'-phosphate is required as a cofactor.

The catalysed reaction is L-histidinol phosphate + 2-oxoglutarate = 3-(imidazol-4-yl)-2-oxopropyl phosphate + L-glutamate. It participates in amino-acid biosynthesis; L-histidine biosynthesis; L-histidine from 5-phospho-alpha-D-ribose 1-diphosphate: step 7/9. The polypeptide is Histidinol-phosphate aminotransferase (Paracoccus denitrificans (strain Pd 1222)).